Here is an 81-residue protein sequence, read N- to C-terminus: Cytotoxin 4N (81 aa).

The N-terminal stretch at 1 to 21 (MKTLLLTLVVVTIVCLDLGYT) is a signal peptide. Disulfide bonds link Cys-24–Cys-42, Cys-35–Cys-59, Cys-63–Cys-74, and Cys-75–Cys-80.

This sequence belongs to the three-finger toxin family. Short-chain subfamily. Type IA cytotoxin sub-subfamily. As to quaternary structure, monomer in solution; Homodimer and oligomer in the presence of negatively charged lipids forming a pore with a size ranging between 20 and 30 Angstroms. In terms of tissue distribution, expressed by the venom gland.

Its subcellular location is the secreted. It localises to the target cell membrane. In terms of biological role, shows cytolytic activity on many different cells by forming pore in lipid membranes. In vivo, increases heart rate or kills the animal by cardiac arrest. In addition, it binds to heparin with high affinity, interacts with Kv channel-interacting protein 1 (KCNIP1) in a calcium-independent manner, and binds to integrin alpha-V/beta-3 (ITGAV/ITGB3) with moderate affinity. The sequence is that of Cytotoxin 4N from Naja atra (Chinese cobra).